A 423-amino-acid polypeptide reads, in one-letter code: Histidine--tRNA ligase 2 (423 aa).

Belongs to the class-II aminoacyl-tRNA synthetase family. In terms of assembly, homodimer.

It localises to the cytoplasm. The enzyme catalyses tRNA(His) + L-histidine + ATP = L-histidyl-tRNA(His) + AMP + diphosphate + H(+). The protein is Histidine--tRNA ligase 2 of Bacillus cereus (strain ATCC 14579 / DSM 31 / CCUG 7414 / JCM 2152 / NBRC 15305 / NCIMB 9373 / NCTC 2599 / NRRL B-3711).